We begin with the raw amino-acid sequence, 92 residues long: Small ribosomal subunit protein uS19 (92 aa).

This sequence belongs to the universal ribosomal protein uS19 family.

Protein S19 forms a complex with S13 that binds strongly to the 16S ribosomal RNA. This is Small ribosomal subunit protein uS19 from Rhizobium etli (strain CIAT 652).